Here is a 132-residue protein sequence, read N- to C-terminus: Z-ring associated protein G (132 aa).

The helical transmembrane segment at Met-1 to Met-21 threads the bilayer. The disordered stretch occupies residues Phe-95–Asp-132.

This sequence belongs to the ZapG family.

It localises to the cell inner membrane. In terms of biological role, involved in cell division, cell envelope biogenesis and cell shape maintenance. The protein is Z-ring associated protein G of Escherichia coli O157:H7.